Consider the following 212-residue polypeptide: ATP phosphoribosyltransferase (212 aa).

Belongs to the ATP phosphoribosyltransferase family. Short subfamily. As to quaternary structure, heteromultimer composed of HisG and HisZ subunits.

The protein localises to the cytoplasm. The catalysed reaction is 1-(5-phospho-beta-D-ribosyl)-ATP + diphosphate = 5-phospho-alpha-D-ribose 1-diphosphate + ATP. It participates in amino-acid biosynthesis; L-histidine biosynthesis; L-histidine from 5-phospho-alpha-D-ribose 1-diphosphate: step 1/9. In terms of biological role, catalyzes the condensation of ATP and 5-phosphoribose 1-diphosphate to form N'-(5'-phosphoribosyl)-ATP (PR-ATP). Has a crucial role in the pathway because the rate of histidine biosynthesis seems to be controlled primarily by regulation of HisG enzymatic activity. The polypeptide is ATP phosphoribosyltransferase (hisG) (Halalkalibacterium halodurans (strain ATCC BAA-125 / DSM 18197 / FERM 7344 / JCM 9153 / C-125) (Bacillus halodurans)).